The sequence spans 510 residues: Cytochrome P450 monooxygenase AFLA_114810 (510 aa).

The first 17 residues, 1-17, serve as a signal peptide directing secretion; sequence MLILLGLLCLYTGLYVA. Cysteine 444 provides a ligand contact to heme.

It belongs to the cytochrome P450 family. Heme is required as a cofactor.

It functions in the pathway secondary metabolite biosynthesis. Functionally, cytochrome P450 monooxygenase; part of the gene cluster 41 that mediates the biosynthesis of an extracellular and diffusible metabolite that is able to stimulate colony sclerotial production. This Aspergillus flavus (strain ATCC 200026 / FGSC A1120 / IAM 13836 / NRRL 3357 / JCM 12722 / SRRC 167) protein is Cytochrome P450 monooxygenase AFLA_114810.